Reading from the N-terminus, the 98-residue chain is NADH-ubiquinone oxidoreductase chain 4L (98 aa).

3 consecutive transmembrane segments (helical) span residues 1–21, 29–49, and 58–78; these read MPLI…GMLV, SLLC…LMTL, and IMPI…LALL.

The protein belongs to the complex I subunit 4L family. In terms of assembly, core subunit of respiratory chain NADH dehydrogenase (Complex I) which is composed of 45 different subunits.

It is found in the mitochondrion inner membrane. It catalyses the reaction a ubiquinone + NADH + 5 H(+)(in) = a ubiquinol + NAD(+) + 4 H(+)(out). In terms of biological role, core subunit of the mitochondrial membrane respiratory chain NADH dehydrogenase (Complex I) which catalyzes electron transfer from NADH through the respiratory chain, using ubiquinone as an electron acceptor. Part of the enzyme membrane arm which is embedded in the lipid bilayer and involved in proton translocation. The polypeptide is NADH-ubiquinone oxidoreductase chain 4L (MT-ND4L) (Pongo abelii (Sumatran orangutan)).